The chain runs to 830 residues: Penicillin-binding protein 1A (830 aa).

Residues 1 to 17 (MTERKREHKDRKQKKNS) show a composition bias toward basic residues. Residues 1–20 (MTERKREHKDRKQKKNSPKN) form a disordered region. Residues 1–30 (MTERKREHKDRKQKKNSPKNQSKVTKFLKW) are Cytoplasmic-facing. Residues 31 to 51 (FFIGILLLGITAVTVVGIYVL) traverse the membrane as a helical; Signal-anchor for type II membrane protein segment. Topologically, residues 52–830 (SIIRSSPELD…QNGQNNNITQ (779 aa)) are extracellular. The segment at 72 to 244 (SILYDDQGNF…PTSYDGLSEA (173 aa)) is transglycosylase. The active-site Proton donor; for transglycosylase activity is glutamate 111. A transpeptidase region spans residues 378-663 (ASATIIDYKT…TSPIFGKIMG (286 aa)). Serine 417 acts as the Acyl-ester intermediate; for transpeptidase activity in catalysis. The segment at 731–830 (APDTNDNNNS…QNGQNNNITQ (100 aa)) is disordered. Residues 735–746 (NDNNNSGANEGN) are compositionally biased toward low complexity. Residues 747 to 758 (KQQETKPEEVKP) are compositionally biased toward basic and acidic residues. Composition is skewed to low complexity over residues 759–807 (NENN…NTNN) and 816–830 (GNNQNQNGQNNNITQ).

The protein in the N-terminal section; belongs to the glycosyltransferase 51 family. In the C-terminal section; belongs to the transpeptidase family.

It is found in the cell membrane. It catalyses the reaction [GlcNAc-(1-&gt;4)-Mur2Ac(oyl-L-Ala-gamma-D-Glu-L-Lys-D-Ala-D-Ala)](n)-di-trans,octa-cis-undecaprenyl diphosphate + beta-D-GlcNAc-(1-&gt;4)-Mur2Ac(oyl-L-Ala-gamma-D-Glu-L-Lys-D-Ala-D-Ala)-di-trans,octa-cis-undecaprenyl diphosphate = [GlcNAc-(1-&gt;4)-Mur2Ac(oyl-L-Ala-gamma-D-Glu-L-Lys-D-Ala-D-Ala)](n+1)-di-trans,octa-cis-undecaprenyl diphosphate + di-trans,octa-cis-undecaprenyl diphosphate + H(+). It carries out the reaction Preferential cleavage: (Ac)2-L-Lys-D-Ala-|-D-Ala. Also transpeptidation of peptidyl-alanyl moieties that are N-acyl substituents of D-alanine.. Its pathway is cell wall biogenesis; peptidoglycan biosynthesis. Its function is as follows. Cell wall formation. Synthesis of cross-linked peptidoglycan from the lipid intermediates. The enzyme has a penicillin-insensitive transglycosylase N-terminal domain (formation of linear glycan strands) and a penicillin-sensitive transpeptidase C-terminal domain (cross-linking of the peptide subunits). This chain is Penicillin-binding protein 1A (pbpA), found in Clostridium perfringens (strain ATCC 13124 / DSM 756 / JCM 1290 / NCIMB 6125 / NCTC 8237 / Type A).